The following is a 124-amino-acid chain: MAIIIAIIAAVIVIAALITFNVRNASPGPEKQEATDRIAPPEEEKNEAHYPAEARAAEHTPSVVKNDSPKEKRDTMGDDIYRQALQKFKHSDEVHAEEEVTEESDKMQDRSYRDALLSMKNKKK.

The chain crosses the membrane as a helical span at residues 2-22 (AIIIAIIAAVIVIAALITFNV). A disordered region spans residues 24–124 (NASPGPEKQE…ALLSMKNKKK (101 aa)). 3 stretches are compositionally biased toward basic and acidic residues: residues 30–58 (EKQE…RAAE), 67–81 (DSPK…DDIY), and 89–113 (KHSD…RSYR).

Its subcellular location is the membrane. This is an uncharacterized protein from Bacillus subtilis (strain 168).